We begin with the raw amino-acid sequence, 212 residues long: Ribonuclease HII (212 aa).

Positions 28-212 (SLIAGIDEVG…KSFAPVRQVF (185 aa)) constitute an RNase H type-2 domain. Residues Asp-34, Glu-35, and Asp-127 each coordinate a divalent metal cation.

It belongs to the RNase HII family. It depends on Mn(2+) as a cofactor. Mg(2+) is required as a cofactor.

Its subcellular location is the cytoplasm. The enzyme catalyses Endonucleolytic cleavage to 5'-phosphomonoester.. Endonuclease that specifically degrades the RNA of RNA-DNA hybrids. The protein is Ribonuclease HII of Chlamydia abortus (strain DSM 27085 / S26/3) (Chlamydophila abortus).